Reading from the N-terminus, the 244-residue chain is Glutathione S-transferase theta-2 (244 aa).

Residues 2-82 (GLELFLDLVS…YLSCKYQTPD (81 aa)) form the GST N-terminal domain. Glutathione contacts are provided by residues 40–41 (HK), 53–54 (KL), 66–67 (ES), and 104–107 (DCIR). Residues 88–224 (DLQARARVHE…SILEQAAKKT (137 aa)) form the GST C-terminal domain.

Belongs to the GST superfamily. Theta family. As to quaternary structure, homodimer. Expressed at low levels in liver. In lung, expressed at low levels in ciliated bronchiolar cells, alveolar macrophages and alveolar type II cells.

The protein resides in the cytoplasm. It is found in the cytosol. Its subcellular location is the nucleus. The catalysed reaction is RX + glutathione = an S-substituted glutathione + a halide anion + H(+). Conjugation of reduced glutathione to a wide number of exogenous and endogenous hydrophobic electrophiles. Has a sulfatase activity. In Homo sapiens (Human), this protein is Glutathione S-transferase theta-2 (GSTT2).